A 139-amino-acid polypeptide reads, in one-letter code: Putative esterase PM0788 (139 aa).

It belongs to the thioesterase PaaI family.

The protein is Putative esterase PM0788 of Pasteurella multocida (strain Pm70).